The following is a 385-amino-acid chain: MSARLADVIEVLDHAYPPRFAQSWDSVGLVCGDPEDVLEAITIAVDATPAVIDEVPDSGLLLVHHPLLLHGVDTVAVSTPKGALVHRLIRSGRSLFTAHTNADSASPGVSDALAHVFGLTVDAVLEPLLGVASLDKWVIYVPLEHVAAVQAAVFEAGAGHIGDYSHCSWSVTGTGQFMPHDGASPVVGSIGAIERVAEDRVEVVAPARARAAVLSAMHAAHPYEEPAFDIFALVPPPGDVGLGRIGTLPRPESLSAFVARVGAALPQTSSGVRATGDPDMLVSRVAVCGGAGDSLLSLAAVADVQAYVTADLRHHPADEHRRASNVALIDVAHWASEFPWCGQAADVLRSHFGTALSVRVCTIRTDPWNLGARRVNDVSDSGRDQ.

Residues H64, H65, D103, H333, and E337 each coordinate a divalent metal cation.

This sequence belongs to the GTP cyclohydrolase I type 2/NIF3 family. As to quaternary structure, homohexamer.

The polypeptide is GTP cyclohydrolase 1 type 2 homolog (Mycobacterium leprae (strain TN)).